The chain runs to 476 residues: Bifunctional protein GlmU (476 aa).

Residues 1-232 are pyrophosphorylase; that stretch reads MGDLAAIILA…PVEVMGVNDR (232 aa). UDP-N-acetyl-alpha-D-glucosamine-binding positions include 9–12, K23, Q75, and 80–81; these read LAAG and GT. D105 lines the Mg(2+) pocket. UDP-N-acetyl-alpha-D-glucosamine-binding residues include G142, E157, N172, and N230. A Mg(2+)-binding site is contributed by N230. Residues 233-253 form a linker region; it reads AQLAEAGRFARQRINRELMLD. Positions 254-476 are N-acetyltransferase; sequence GVTIVDPAAT…DGWKLKQRDQ (223 aa). The UDP-N-acetyl-alpha-D-glucosamine site is built by R353 and K371. Residue H383 is the Proton acceptor of the active site. Residues Y386 and N397 each contribute to the UDP-N-acetyl-alpha-D-glucosamine site. Acetyl-CoA is bound by residues 406–407, S425, A443, and R460; that span reads NY.

It in the N-terminal section; belongs to the N-acetylglucosamine-1-phosphate uridyltransferase family. This sequence in the C-terminal section; belongs to the transferase hexapeptide repeat family. In terms of assembly, homotrimer. The cofactor is Mg(2+).

It localises to the cytoplasm. It catalyses the reaction alpha-D-glucosamine 1-phosphate + acetyl-CoA = N-acetyl-alpha-D-glucosamine 1-phosphate + CoA + H(+). The catalysed reaction is N-acetyl-alpha-D-glucosamine 1-phosphate + UTP + H(+) = UDP-N-acetyl-alpha-D-glucosamine + diphosphate. It functions in the pathway nucleotide-sugar biosynthesis; UDP-N-acetyl-alpha-D-glucosamine biosynthesis; N-acetyl-alpha-D-glucosamine 1-phosphate from alpha-D-glucosamine 6-phosphate (route II): step 2/2. Its pathway is nucleotide-sugar biosynthesis; UDP-N-acetyl-alpha-D-glucosamine biosynthesis; UDP-N-acetyl-alpha-D-glucosamine from N-acetyl-alpha-D-glucosamine 1-phosphate: step 1/1. It participates in bacterial outer membrane biogenesis; LPS lipid A biosynthesis. Its function is as follows. Catalyzes the last two sequential reactions in the de novo biosynthetic pathway for UDP-N-acetylglucosamine (UDP-GlcNAc). The C-terminal domain catalyzes the transfer of acetyl group from acetyl coenzyme A to glucosamine-1-phosphate (GlcN-1-P) to produce N-acetylglucosamine-1-phosphate (GlcNAc-1-P), which is converted into UDP-GlcNAc by the transfer of uridine 5-monophosphate (from uridine 5-triphosphate), a reaction catalyzed by the N-terminal domain. The polypeptide is Bifunctional protein GlmU (Geobacter metallireducens (strain ATCC 53774 / DSM 7210 / GS-15)).